A 379-amino-acid chain; its full sequence is Transcription termination factor 1a, mitochondrial (379 aa).

The transit peptide at 1–37 (MASRNIWCVRRNFLFDLRDWMLQYSAEVFLKSISFRP) directs the protein to the mitochondrion. 5 interaction with DNA regions span residues 151 to 152 (RS), 229 to 233 (QSTKR), 306 to 313 (SEKKFNDK), 337 to 340 (SINT), and 366 to 373 (SQRRYEAK).

It belongs to the mTERF family. In terms of assembly, monomer. In terms of processing, phosphoprotein with mostly four phosphate groups. While the DNA-binding activity is unaffected by the phosphorylation state, only the phosphorylated form of the protein is active for termination activity. Functioning seems to be regulated by phosphorylation. In terms of tissue distribution, predominantly expressed in heart and liver, with extremely low levels in other tissues. Expressed strongly in the heart and at lower levels in brain, liver and kidney.

The protein localises to the mitochondrion. In terms of biological role, transcription termination factor. Binds to a 28 bp region within the tRNA(Leu(uur)) gene at a position immediately adjacent to and downstream of the 16S rRNA gene; this region comprises a tridecamer sequence critical for directing accurate termination. Binds DNA along the major grove and promotes DNA bending and partial unwinding. Promotes base flipping. Transcription termination activity appears to be polarized with highest specificity for transcripts initiated on the light strand. The protein is Transcription termination factor 1a, mitochondrial (Mterf1a) of Mus musculus (Mouse).